A 155-amino-acid polypeptide reads, in one-letter code: 17.3 kDa class II heat shock protein (155 aa).

The region spanning 39–155 (DAKAMAATPA…KPKTIEVKVA (117 aa)) is the sHSP domain.

This sequence belongs to the small heat shock protein (HSP20) family.

It localises to the cytoplasm. This Solanum peruvianum (Peruvian tomato) protein is 17.3 kDa class II heat shock protein.